A 1026-amino-acid chain; its full sequence is Leucine-rich repeat and coiled-coil domain-containing protein 1 (1026 aa).

LRR repeat units lie at residues 39–60 (SIHA…DHIW), 61–82 (NLRH…NTLT), 83–104 (KLCT…EALV), 105–126 (NLTK…MPLH), and 131–152 (KLRY…LQCT). The LRRCT domain occupies 170–212 (NPICLIPGYRAIILQTLPQLRILDCKNIFGEPVSLEEINSSHL). A disordered region spans residues 310-338 (DNVPEKDLRPKRDTDITSESDYGNRRECS). The span at 312–324 (VPEKDLRPKRDTD) shows a compositional bias: basic and acidic residues. Residues 428-641 (REMRWKAEQT…DLENEFRIAL (214 aa)) are a coiled coil.

This sequence belongs to the LRRCC1 family.

The protein resides in the cytoplasm. It is found in the cytoskeleton. The protein localises to the microtubule organizing center. It localises to the centrosome. Its subcellular location is the centriole. Required for the organization of the mitotic spindle. Maintains the structural integrity of centrosomes during mitosis. In Mus musculus (Mouse), this protein is Leucine-rich repeat and coiled-coil domain-containing protein 1 (Lrrcc1).